The chain runs to 154 residues: Aspartate carbamoyltransferase regulatory chain (154 aa).

Zn(2+) contacts are provided by C109, C114, C138, and C141.

It belongs to the PyrI family. In terms of assembly, contains catalytic and regulatory chains. Zn(2+) is required as a cofactor.

Functionally, involved in allosteric regulation of aspartate carbamoyltransferase. The protein is Aspartate carbamoyltransferase regulatory chain of Aliivibrio fischeri (strain ATCC 700601 / ES114) (Vibrio fischeri).